The sequence spans 692 residues: Elongation factor G (692 aa).

One can recognise a tr-type G domain in the interval 9 to 284; it reads HKVRNIGIAA…AVVDYLPAPD (276 aa). Residues 18–25, 82–86, and 136–139 each bind GTP; these read AHIDAGKT, DTPGH, and NKMD.

This sequence belongs to the TRAFAC class translation factor GTPase superfamily. Classic translation factor GTPase family. EF-G/EF-2 subfamily.

It is found in the cytoplasm. In terms of biological role, catalyzes the GTP-dependent ribosomal translocation step during translation elongation. During this step, the ribosome changes from the pre-translocational (PRE) to the post-translocational (POST) state as the newly formed A-site-bound peptidyl-tRNA and P-site-bound deacylated tRNA move to the P and E sites, respectively. Catalyzes the coordinated movement of the two tRNA molecules, the mRNA and conformational changes in the ribosome. In Campylobacter concisus (strain 13826), this protein is Elongation factor G.